Here is a 746-residue protein sequence, read N- to C-terminus: Long-chain-alcohol oxidase FAO3 (746 aa).

A helical transmembrane segment spans residues 139 to 159; it reads ILTPIRAAFVYIKVAFLFCFF. 233-248 is an FAD binding site; sequence CDVVVVGSGSGGGVAA. Residue His677 is the Proton acceptor of the active site.

It belongs to the GMC oxidoreductase family.

The protein localises to the membrane. It carries out the reaction a long-chain primary fatty alcohol + O2 = a long-chain fatty aldehyde + H2O2. Its function is as follows. Long-chain fatty alcohol oxidase involved in the omega-oxidation pathway of lipid degradation. This Arabidopsis thaliana (Mouse-ear cress) protein is Long-chain-alcohol oxidase FAO3 (FAO3).